A 581-amino-acid chain; its full sequence is Arginine--tRNA ligase (581 aa).

Residues 126 to 136 (PNLAKEMHVGH) carry the 'HIGH' region motif.

Belongs to the class-I aminoacyl-tRNA synthetase family. Monomer.

Its subcellular location is the cytoplasm. The catalysed reaction is tRNA(Arg) + L-arginine + ATP = L-arginyl-tRNA(Arg) + AMP + diphosphate. The polypeptide is Arginine--tRNA ligase (Shewanella denitrificans (strain OS217 / ATCC BAA-1090 / DSM 15013)).